Consider the following 217-residue polypeptide: Grancalcin (217 aa).

EF-hand domains follow at residues 48–83, 89–122, 119–154, and 155–180; these read SSAG…SGIN, FSLE…AALN, AALN…MGYR, and LSPQ…DYVA. Ca(2+) contacts are provided by Asp65, Asp69, and Glu71. Ca(2+) is bound by residues Asp132, Asp134, Ser136, Thr138, and Glu143.

As to quaternary structure, homodimer. Interacts with SRI and LCP1. As to expression, detected in neutrophils and macrophages (at protein level). Highly expressed in bone marrow.

Its subcellular location is the cytoplasm. The protein localises to the cytoplasmic granule membrane. In terms of biological role, calcium-binding protein that may play a role in the adhesion of neutrophils to fibronectin. May play a role in the formation of focal adhesions. The sequence is that of Grancalcin (GCA) from Homo sapiens (Human).